The sequence spans 406 residues: Arginine biosynthesis bifunctional protein ArgJ (406 aa).

Thr154, Lys180, Thr191, Glu278, Asn401, and Thr406 together coordinate substrate. The active-site Nucleophile is the Thr191.

Belongs to the ArgJ family. In terms of assembly, heterotetramer of two alpha and two beta chains.

The protein localises to the cytoplasm. It catalyses the reaction N(2)-acetyl-L-ornithine + L-glutamate = N-acetyl-L-glutamate + L-ornithine. It carries out the reaction L-glutamate + acetyl-CoA = N-acetyl-L-glutamate + CoA + H(+). It functions in the pathway amino-acid biosynthesis; L-arginine biosynthesis; L-ornithine and N-acetyl-L-glutamate from L-glutamate and N(2)-acetyl-L-ornithine (cyclic): step 1/1. Its pathway is amino-acid biosynthesis; L-arginine biosynthesis; N(2)-acetyl-L-ornithine from L-glutamate: step 1/4. Catalyzes two activities which are involved in the cyclic version of arginine biosynthesis: the synthesis of N-acetylglutamate from glutamate and acetyl-CoA as the acetyl donor, and of ornithine by transacetylation between N(2)-acetylornithine and glutamate. The polypeptide is Arginine biosynthesis bifunctional protein ArgJ (Gloeobacter violaceus (strain ATCC 29082 / PCC 7421)).